A 556-amino-acid chain; its full sequence is Urocanate hydratase (556 aa).

NAD(+) contacts are provided by residues 52–53, glutamine 130, 176–178, glutamate 196, arginine 201, 242–243, 263–267, 273–274, and tyrosine 322; these read GG, GMG, NA, QTSAH, and YL. Residue cysteine 410 is part of the active site. NAD(+) is bound at residue glycine 492.

This sequence belongs to the urocanase family. Requires NAD(+) as cofactor.

Its subcellular location is the cytoplasm. It carries out the reaction 4-imidazolone-5-propanoate = trans-urocanate + H2O. It participates in amino-acid degradation; L-histidine degradation into L-glutamate; N-formimidoyl-L-glutamate from L-histidine: step 2/3. Its function is as follows. Catalyzes the conversion of urocanate to 4-imidazolone-5-propionate. This is Urocanate hydratase from Shewanella sp. (strain MR-7).